The following is a 158-amino-acid chain: Protein-export protein SecB (158 aa).

Belongs to the SecB family. Homotetramer, a dimer of dimers. One homotetramer interacts with 1 SecA dimer.

The protein resides in the cytoplasm. In terms of biological role, one of the proteins required for the normal export of preproteins out of the cell cytoplasm. It is a molecular chaperone that binds to a subset of precursor proteins, maintaining them in a translocation-competent state. It also specifically binds to its receptor SecA. This chain is Protein-export protein SecB, found in Yersinia pestis (strain Pestoides F).